Here is a 360-residue protein sequence, read N- to C-terminus: Phospho-N-acetylmuramoyl-pentapeptide-transferase (360 aa).

The next 10 membrane-spanning stretches (helical) occupy residues V27–F47, T71–A91, V98–L118, L142–M162, Y168–S188, G199–T219, A236–F256, V263–L283, I288–V308, and V338–K358.

Belongs to the glycosyltransferase 4 family. MraY subfamily. The cofactor is Mg(2+).

Its subcellular location is the cell inner membrane. It catalyses the reaction UDP-N-acetyl-alpha-D-muramoyl-L-alanyl-gamma-D-glutamyl-meso-2,6-diaminopimeloyl-D-alanyl-D-alanine + di-trans,octa-cis-undecaprenyl phosphate = di-trans,octa-cis-undecaprenyl diphospho-N-acetyl-alpha-D-muramoyl-L-alanyl-D-glutamyl-meso-2,6-diaminopimeloyl-D-alanyl-D-alanine + UMP. Its pathway is cell wall biogenesis; peptidoglycan biosynthesis. Its function is as follows. Catalyzes the initial step of the lipid cycle reactions in the biosynthesis of the cell wall peptidoglycan: transfers peptidoglycan precursor phospho-MurNAc-pentapeptide from UDP-MurNAc-pentapeptide onto the lipid carrier undecaprenyl phosphate, yielding undecaprenyl-pyrophosphoryl-MurNAc-pentapeptide, known as lipid I. The protein is Phospho-N-acetylmuramoyl-pentapeptide-transferase of Psychromonas ingrahamii (strain DSM 17664 / CCUG 51855 / 37).